A 742-amino-acid chain; its full sequence is Ectonucleotide pyrophosphatase/phosphodiesterase 1 (742 aa).

Over 1–113 the chain is Cytoplasmic; sequence MELQNDLESL…TGFHSKVPFK (113 aa). A helical transmembrane segment spans residues 114 to 134; it reads IIFRTLFGSLVFAIFLILMIN. Residues 135–742 lie on the Extracellular side of the membrane; the sequence is IAKPHHSTRV…SIDDLVDSDT (608 aa). Asparagine 161 and asparagine 204 each carry an N-linked (GlcNAc...) asparagine glycan. The tract at residues 168–545 is phosphodiesterase; the sequence is PLTIVISLDG…VFTIGSHGYD (378 aa). Threonine 219 (nucleophile) is an active-site residue. N-linked (GlcNAc...) asparagine glycans are attached at residues asparagine 264, asparagine 296, and asparagine 403. A compositionally biased stretch (acidic residues) spans 640-659; it reads EETEQDNVDNDNDDNDDGNT. Disordered stretches follow at residues 640–670 and 686–711; these read EETE…SSSL and TLLG…TAST. Low complexity predominate over residues 691-711; the sequence is TSPSSRSSSSSSIQASATAST.

This sequence belongs to the nucleotide pyrophosphatase/phosphodiesterase family. In terms of processing, autophosphorylated as part of the catalytic cycle of phosphodiesterase/pyrophosphatase activity. N-glycosylated.

The protein localises to the membrane. It catalyses the reaction Hydrolytically removes 5'-nucleotides successively from the 3'-hydroxy termini of 3'-hydroxy-terminated oligonucleotides.. The catalysed reaction is a ribonucleoside 5'-triphosphate + H2O = a ribonucleoside 5'-phosphate + diphosphate + H(+). The enzyme catalyses a 2'-deoxyribonucleoside 5'-triphosphate + H2O = a 2'-deoxyribonucleoside 5'-phosphate + diphosphate + H(+). Mediates extracellular nucleotide derived phosphate hydrolysis along with NPP2 and PHO5. The polypeptide is Ectonucleotide pyrophosphatase/phosphodiesterase 1 (NPP1) (Saccharomyces cerevisiae (strain ATCC 204508 / S288c) (Baker's yeast)).